Consider the following 177-residue polypeptide: Prorelaxin (177 aa).

The signal sequence occupies residues 1–22; it reads MSCKFVLQLLGFWLLLSQPCRA. 3 cysteine pairs are disulfide-bonded: C36-C164, C48-C177, and C163-C168. Positions 64–149 are cleaved as a propeptide — connecting peptide; sequence MTEEAVSSFI…LKSLYLDTLS (86 aa). Positions 80–114 are disordered; sequence FDTMPNLSEKPKTALPEGHPSLPEQQQYVPVSSDS. The span at 102-114 shows a compositional bias: polar residues; that stretch reads PEQQQYVPVSSDS.

It belongs to the insulin family. Heterodimer of a B chain and an A chain linked by two disulfide bonds.

It localises to the secreted. Functionally, relaxin is an ovarian hormone that acts with estrogen to produce dilatation of the birth canal in many mammals. It bears mature young, and allows separation of the pelvic bones. The protein is Prorelaxin (RLN) of Mesocricetus auratus (Golden hamster).